The chain runs to 111 residues: Auxin-repressed 12.5 kDa protein (111 aa).

Residues 18–111 form a disordered region; sequence ERGLGMLRKV…SGETRSKHHR (94 aa). Over residues 43–57 the composition is skewed to low complexity; sequence TMPTTPTTPVTPTTP. Residues 74 to 95 show a composition bias toward polar residues; sequence SNLSSKTMGNQVFDSPQPNSPT.

This sequence belongs to the DRM1/ARP family.

The sequence is that of Auxin-repressed 12.5 kDa protein from Fragaria ananassa (Strawberry).